Here is a 414-residue protein sequence, read N- to C-terminus: Serine--tRNA ligase (414 aa).

230 to 232 (TSE) is a binding site for L-serine. 261–263 (RQE) contacts ATP. Residue Glu284 participates in L-serine binding. 348–351 (EISS) lines the ATP pocket. Ser382 is a binding site for L-serine.

Belongs to the class-II aminoacyl-tRNA synthetase family. Type-1 seryl-tRNA synthetase subfamily. As to quaternary structure, homodimer. The tRNA molecule binds across the dimer.

The protein localises to the cytoplasm. It carries out the reaction tRNA(Ser) + L-serine + ATP = L-seryl-tRNA(Ser) + AMP + diphosphate + H(+). The enzyme catalyses tRNA(Sec) + L-serine + ATP = L-seryl-tRNA(Sec) + AMP + diphosphate + H(+). It functions in the pathway aminoacyl-tRNA biosynthesis; selenocysteinyl-tRNA(Sec) biosynthesis; L-seryl-tRNA(Sec) from L-serine and tRNA(Sec): step 1/1. Functionally, catalyzes the attachment of serine to tRNA(Ser). Is also able to aminoacylate tRNA(Sec) with serine, to form the misacylated tRNA L-seryl-tRNA(Sec), which will be further converted into selenocysteinyl-tRNA(Sec). This chain is Serine--tRNA ligase, found in Campylobacter concisus (strain 13826).